Consider the following 112-residue polypeptide: Macrodomain Ori protein (112 aa).

The interval 91 to 112 is disordered; that stretch reads FHTLSGGKPQVEGAEDYTEADD. Residues 103–112 are compositionally biased toward acidic residues; it reads GAEDYTEADD.

This sequence belongs to the MaoP family.

Functionally, involved in the organization of the Ori region of the chromosome into a macrodomain (MD). It constrains DNA mobility in the Ori macrodomain and limits long-distance DNA interactions with other chromosomal regions. This chain is Macrodomain Ori protein, found in Salmonella choleraesuis (strain SC-B67).